The sequence spans 260 residues: MAEQEQGTGIRVEALAPEFQAQAQAWAQRLGLPMTDDEAGFAVQVGVDGLQVQQLGPQAPGPVRVDFVEGQAAHRRLYGGGSGQMIAKAVGIAQGVRPQVLDATAGLGKDAFVLASLGCQMTLIERQPLIAALLEDGLARARGDLEVGGIVERMRLLTGNAIERMRAWEGEAPQVIYLDPMFPHRDKSALVKKEMRVFRPLVGDDLDAPALLEAALALASHRVVVKRPRKAPIIEGVKPSHSLEGKSSRYDIYPKKALKG.

Residues 125–126 (ER) and aspartate 179 each bind S-adenosyl-L-methionine.

Belongs to the methyltransferase superfamily. RsmJ family.

The protein localises to the cytoplasm. The catalysed reaction is guanosine(1516) in 16S rRNA + S-adenosyl-L-methionine = N(2)-methylguanosine(1516) in 16S rRNA + S-adenosyl-L-homocysteine + H(+). Its function is as follows. Specifically methylates the guanosine in position 1516 of 16S rRNA. The sequence is that of Ribosomal RNA small subunit methyltransferase J from Pseudomonas entomophila (strain L48).